A 456-amino-acid chain; its full sequence is Adenylosuccinate synthetase isozyme 2 (456 aa).

The tract at residues 1-24 (MAFAETNPAASSLPNGDCGRPRAR) is disordered. Residues 39-45 (GDEGKGK) and 67-69 (GHT) each bind GTP. The active-site Proton acceptor is D40. D40 and G67 together coordinate Mg(2+). Position 40 (D40) interacts with substrate. IMP contacts are provided by residues 40 to 43 (DEGK), 65 to 68 (NAGH), T162, R176, N255, T270, and R334. H68 (proton donor) is an active-site residue. 330–336 (VTTGRKR) contacts substrate. Residues R336, 362-364 (KLD), and 444-447 (GVGK) contribute to the GTP site.

It belongs to the adenylosuccinate synthetase family. In terms of assembly, homodimer. Mg(2+) is required as a cofactor. Widely expressed.

Its subcellular location is the cytoplasm. The protein localises to the mitochondrion. The enzyme catalyses IMP + L-aspartate + GTP = N(6)-(1,2-dicarboxyethyl)-AMP + GDP + phosphate + 2 H(+). The protein operates within purine metabolism; AMP biosynthesis via de novo pathway; AMP from IMP: step 1/2. Inhibited competitively by AMP and IMP and non-competitively by fructose 1,6-bisphosphate. Plays an important role in the de novo pathway and in the salvage pathway of purine nucleotide biosynthesis. Catalyzes the first committed step in the biosynthesis of AMP from IMP. This chain is Adenylosuccinate synthetase isozyme 2, found in Sus scrofa (Pig).